The chain runs to 284 residues: Formamidopyrimidine-DNA glycosylase (284 aa).

The Schiff-base intermediate with DNA role is filled by Pro2. Glu3 (proton donor) is an active-site residue. Lys60 functions as the Proton donor; for beta-elimination activity in the catalytic mechanism. Positions 94 and 113 each coordinate DNA. The FPG-type zinc finger occupies 243-277 (WVYGRKGEACRVCGTTIERLRLAGRSSHYCPQCQP). Arg267 functions as the Proton donor; for delta-elimination activity in the catalytic mechanism.

It belongs to the FPG family. Monomer. Zn(2+) is required as a cofactor.

The enzyme catalyses Hydrolysis of DNA containing ring-opened 7-methylguanine residues, releasing 2,6-diamino-4-hydroxy-5-(N-methyl)formamidopyrimidine.. The catalysed reaction is 2'-deoxyribonucleotide-(2'-deoxyribose 5'-phosphate)-2'-deoxyribonucleotide-DNA = a 3'-end 2'-deoxyribonucleotide-(2,3-dehydro-2,3-deoxyribose 5'-phosphate)-DNA + a 5'-end 5'-phospho-2'-deoxyribonucleoside-DNA + H(+). Involved in base excision repair of DNA damaged by oxidation or by mutagenic agents. Acts as a DNA glycosylase that recognizes and removes damaged bases. Has a preference for oxidized purines, such as 7,8-dihydro-8-oxoguanine (8-oxoG). Has AP (apurinic/apyrimidinic) lyase activity and introduces nicks in the DNA strand. Cleaves the DNA backbone by beta-delta elimination to generate a single-strand break at the site of the removed base with both 3'- and 5'-phosphates. The polypeptide is Formamidopyrimidine-DNA glycosylase (mutM) (Synechococcus elongatus).